A 404-amino-acid polypeptide reads, in one-letter code: Cysteine desulfurase IscS (404 aa).

Residues 75–76 (AT), asparagine 155, glutamine 183, and 203–205 (SAH) contribute to the pyridoxal 5'-phosphate site. Lysine 206 carries the post-translational modification N6-(pyridoxal phosphate)lysine. Residue threonine 243 participates in pyridoxal 5'-phosphate binding. Cysteine 328 acts as the Cysteine persulfide intermediate in catalysis. Residue cysteine 328 coordinates [2Fe-2S] cluster.

The protein belongs to the class-V pyridoxal-phosphate-dependent aminotransferase family. NifS/IscS subfamily. Homodimer. Forms a heterotetramer with IscU, interacts with other sulfur acceptors. It depends on pyridoxal 5'-phosphate as a cofactor.

It is found in the cytoplasm. It catalyses the reaction (sulfur carrier)-H + L-cysteine = (sulfur carrier)-SH + L-alanine. It functions in the pathway cofactor biosynthesis; iron-sulfur cluster biosynthesis. Master enzyme that delivers sulfur to a number of partners involved in Fe-S cluster assembly, tRNA modification or cofactor biosynthesis. Catalyzes the removal of elemental sulfur atoms from cysteine to produce alanine. Functions as a sulfur delivery protein for Fe-S cluster synthesis onto IscU, an Fe-S scaffold assembly protein, as well as other S acceptor proteins. The sequence is that of Cysteine desulfurase IscS from Azotobacter vinelandii (strain DJ / ATCC BAA-1303).